Reading from the N-terminus, the 117-residue chain is Large ribosomal subunit protein uL18 (117 aa).

It belongs to the universal ribosomal protein uL18 family. As to quaternary structure, part of the 50S ribosomal subunit; part of the 5S rRNA/L5/L18/L25 subcomplex. Contacts the 5S and 23S rRNAs.

Its function is as follows. This is one of the proteins that bind and probably mediate the attachment of the 5S RNA into the large ribosomal subunit, where it forms part of the central protuberance. The protein is Large ribosomal subunit protein uL18 of Histophilus somni (strain 129Pt) (Haemophilus somnus).